The sequence spans 164 residues: Respiratory growth induced protein 2 (164 aa).

This sequence belongs to the RGI1 family.

The protein resides in the cytoplasm. Functionally, involved in the control of energetic metabolism and significantly contribute to cell fitness, especially under respiratory growth conditions. In Candida glabrata (strain ATCC 2001 / BCRC 20586 / JCM 3761 / NBRC 0622 / NRRL Y-65 / CBS 138) (Yeast), this protein is Respiratory growth induced protein 2 (RGI2).